The primary structure comprises 471 residues: Casein kinase 1-like protein 9 (471 aa).

Residues 9–278 (FKLGRKIGSG…LKRLFRDLFI (270 aa)) form the Protein kinase domain. ATP contacts are provided by residues 15–23 (IGSGSFGEL) and lysine 38. The active-site Proton acceptor is aspartate 128. A disordered region spans residues 300–471 (SSSGSSSRTR…RSLELLTLRK (172 aa)). The span at 325–339 (EKQERIAGKETRENR) shows a compositional bias: basic and acidic residues. Low complexity predominate over residues 385–430 (SSRYGSSSRRAIPSSSRPSSAGGPSDSRSSSRLVTSTGGVGTVSNR). Residues 431–449 (ASTSQRIQAGNESRTSSFS) show a composition bias toward polar residues. Positions 454–464 (NTREDPLRRSL) are enriched in basic and acidic residues.

Belongs to the protein kinase superfamily. CK1 Ser/Thr protein kinase family. Casein kinase I subfamily. In terms of assembly, monomer. Post-translationally, autophosphorylated on serine, threonine and tyrosine residues. As to expression, expressed in leaves, stems and flowers.

The protein resides in the cytoplasm. It is found in the nucleus. The catalysed reaction is L-seryl-[protein] + ATP = O-phospho-L-seryl-[protein] + ADP + H(+). The enzyme catalyses L-threonyl-[protein] + ATP = O-phospho-L-threonyl-[protein] + ADP + H(+). Functionally, casein kinases are operationally defined by their preferential utilization of acidic proteins such as caseins as substrates. Can phosphorylate casein on serine and threonine residues, and poly(Glu,Tyr) in vitro. The chain is Casein kinase 1-like protein 9 from Arabidopsis thaliana (Mouse-ear cress).